We begin with the raw amino-acid sequence, 312 residues long: Protoheme IX farnesyltransferase 2 (312 aa).

The next 8 helical transmembrane spans lie at 31–51 (VMSL…GHIH), 52–72 (PVLG…SGAL), 119–139 (ALVN…YVVI), 152–172 (IVIG…AATG), 179–199 (LLLF…LALF), 225–245 (ILLY…LGYF), 247–267 (WVYG…AIEV), and 283–303 (LFAF…LDVV).

The protein belongs to the UbiA prenyltransferase family. Protoheme IX farnesyltransferase subfamily.

The protein localises to the cell inner membrane. It carries out the reaction heme b + (2E,6E)-farnesyl diphosphate + H2O = Fe(II)-heme o + diphosphate. It functions in the pathway porphyrin-containing compound metabolism; heme O biosynthesis; heme O from protoheme: step 1/1. Functionally, converts heme B (protoheme IX) to heme O by substitution of the vinyl group on carbon 2 of heme B porphyrin ring with a hydroxyethyl farnesyl side group. In Nitrobacter winogradskyi (strain ATCC 25391 / DSM 10237 / CIP 104748 / NCIMB 11846 / Nb-255), this protein is Protoheme IX farnesyltransferase 2.